Here is a 123-residue protein sequence, read N- to C-terminus: Con-ikot-ikot (123 aa).

Positions 1 to 18 (MAMNMSMTLCMFVMVVVA) are cleaved as a signal peptide. A propeptide spanning residues 19–37 (ATVIDSTQLQEPDLSRMRR) is cleaved from the precursor. Disulfide bonds link Cys49/Cys80, Cys50/Cys89, Cys57/Cys72, Cys90/Cys118, and Cys96/Cys113.

Homodimer; disulfide-linked. In terms of tissue distribution, expressed by the venom duct.

The protein resides in the secreted. Potently and selectively blocks the desensitization of ionotropic glutamate AMPA receptors (GRIA1, GRIA2, GRIA3 and GRIA4). Binds to a different site than does the drug cyclothiazide. The toxin acts like a straitjacket on the 'gating ring' of the ligand-binding domain (LBD) of the receptor. It does so by restraining the domains via both intra- and interdimer cross-links such that agonist-induced closure of the LBD 'clamshells' is transduced into an irislike expansion of the gating ring. Compared to other desensitization blockers, it is a poor stabilizer of the open channel because toxin-bound AMPA receptors undergo frequent brief closures. In vitro, application of the toxin to hippocampal slices causes a large and rapid increase in resting AMPA receptor-mediated current leading to neuronal death. This is Con-ikot-ikot from Conus striatus (Striated cone).